A 131-amino-acid chain; its full sequence is Histone H2A (131 aa).

A disordered region spans residues 1–24; it reads MSSGGKGKASSETKSSSRSSKAGL. An N6-acetyllysine mark is found at lysine 6 and lysine 8. A compositionally biased stretch (low complexity) spans 8 to 23; sequence KASSETKSSSRSSKAG. N5-methylglutamine is present on glutamine 105. A Phosphoserine modification is found at serine 128. A [ST]-Q motif motif is present at residues 128–129; it reads SQ.

It belongs to the histone H2A family. The nucleosome is a histone octamer containing two molecules each of H2A, H2B, H3 and H4 assembled in one H3-H4 heterotetramer and two H2A-H2B heterodimers. The octamer wraps approximately 147 bp of DNA. Post-translationally, phosphorylated to form H2AS128ph (gamma-H2A) in response to DNA double-strand breaks (DSBs) generated by exogenous genotoxic agents and by stalled replication forks. Phosphorylation is dependent on the DNA damage checkpoint kinases MEC1/ATR and TEL1/ATM, spreads on either side of a detected DSB site and may mark the surrounding chromatin for recruitment of proteins required for DNA damage signaling and repair. Gamma-H2A is removed from the DNA prior to the strand invasion-primer extension step of the repair process and subsequently dephosphorylated. Dephosphorylation is necessary for efficient recovery from the DNA damage checkpoint. In terms of processing, acetylated by ESA1 to form H2AK4ac and H2AK7ac.

It is found in the nucleus. The protein resides in the chromosome. Functionally, core component of nucleosome which plays a central role in DNA double strand break (DSB) repair. Nucleosomes wrap and compact DNA into chromatin, limiting DNA accessibility to the cellular machineries which require DNA as a template. Histones thereby play a central role in transcription regulation, DNA repair, DNA replication and chromosomal stability. DNA accessibility is regulated via a complex set of post-translational modifications of histones, also called histone code, and nucleosome remodeling. The polypeptide is Histone H2A (HTA1) (Cryptococcus neoformans var. neoformans serotype D (strain B-3501A) (Filobasidiella neoformans)).